A 687-amino-acid chain; its full sequence is POZ (BTB) and AT hook-containing zinc finger 1 (687 aa).

One can recognise a BTB domain in the interval 41 to 130; that stretch reads CDVLLRVGDE…AYTSRIVVRL (90 aa). Residues 250–260 show a composition bias toward polar residues; sequence PFPNVASSAPP. The interval 250–279 is disordered; sequence PFPNVASSAPPLTSKRGRGRPRKANLLDSM. The C2H2-type 1 zinc-finger motif lies at 292–314; that stretch reads LPCGLCGKVFTDANRLRQHEAQH. The tract at residues 332–351 is disordered; the sequence is GENGLPISEDPDGPRKRSRT. C2H2-type zinc fingers lie at residues 355–377, 383–405, 413–436, 442–464, and 495–517; these read VACE…KLSH, YSCP…VRSH, YICQ…KQVH, HKCQ…LACH, and NFCS…VKTH. Residues 564–587 form a disordered region; the sequence is SYGDLSDASDLKTPEKQSANGSFS. The C2H2-type 7 zinc-finger motif lies at 605 to 628; it reads YPCPECGSFFRSKSYLNKHIQKVH.

In terms of assembly, homodimer. Interacts with RNF4. Interacts (via C-terminus) with TP53; this interaction inhibits TP53 ability to activate transcription. In terms of tissue distribution, widely expressed at high levels during embryogenesis, especially in the central nervous system, especially to the actively proliferating neuroblasts in the periventricular neocortical neuroepithelium, in the telencephalic cortical plate and in the hippocampus. Also expressed in a stage-specific manner in the mouse germinal epithelium. While strongly expressed during brain development,m its expression turns down in adult brain.

It localises to the nucleus. Its function is as follows. Transcriptional regulator that plays a role in many biological processes such as embryogenesis, senescence, T-cell development or neurogenesis. Interacts with the TP53 protein to control genes that are important in proliferation and in the DNA-damage response. Mechanistically, the interaction inhibits the DNA binding and transcriptional activity of TP53/p53. Part of the transcriptional network modulating regulatory T-cell development and controls the generation of the regulatory T-cell pool under homeostatic conditions. In Mus musculus (Mouse), this protein is POZ (BTB) and AT hook-containing zinc finger 1.